We begin with the raw amino-acid sequence, 158 residues long: Ribosomal RNA large subunit methyltransferase H (158 aa).

Residues leucine 76, glycine 107, and 126 to 131 (LSGLTM) each bind S-adenosyl-L-methionine.

The protein belongs to the RNA methyltransferase RlmH family. In terms of assembly, homodimer.

The protein localises to the cytoplasm. The catalysed reaction is pseudouridine(1915) in 23S rRNA + S-adenosyl-L-methionine = N(3)-methylpseudouridine(1915) in 23S rRNA + S-adenosyl-L-homocysteine + H(+). Specifically methylates the pseudouridine at position 1915 (m3Psi1915) in 23S rRNA. The protein is Ribosomal RNA large subunit methyltransferase H of Teredinibacter turnerae (strain ATCC 39867 / T7901).